Consider the following 465-residue polypeptide: Probable Xaa-Pro aminopeptidase pepP (465 aa).

Residues Asp263, Asp274, Glu397, and Glu437 each contribute to the Mn(2+) site.

This sequence belongs to the peptidase M24B family. Mn(2+) serves as cofactor.

It catalyses the reaction Release of any N-terminal amino acid, including proline, that is linked to proline, even from a dipeptide or tripeptide.. Its function is as follows. Catalyzes the removal of a penultimate prolyl residue from the N-termini of peptides. This is Probable Xaa-Pro aminopeptidase pepP (pepP) from Emericella nidulans (strain FGSC A4 / ATCC 38163 / CBS 112.46 / NRRL 194 / M139) (Aspergillus nidulans).